The sequence spans 102 residues: Protein B1 (102 aa).

Residues 1 to 102 (MLNDAKQTRA…AQPQPSNNRK (102 aa)) form a disordered region. Composition is skewed to polar residues over residues 8–17 (TRANPGTSRP) and 51–65 (GKTN…TAGE). The span at 75–88 (KGPRGGKTNTRRTP) shows a compositional bias: basic residues.

Its function is as follows. Not known. Encoded on a subgenomic RNA (RNA3) synthesized during replication and which is co-terminal with RNA1. The polypeptide is Protein B1 (B1) (Black beetle virus (BBV)).